Consider the following 201-residue polypeptide: Rac-like GTP-binding protein ARAC2 (201 aa).

13–20 (GDGAVGKT) contributes to the GTP binding site. The Effector region motif lies at 35 to 43 (YVPTVFDNF). GTP-binding positions include 60 to 64 (DTAGQ) and 118 to 121 (TKLD). A Cysteine methyl ester modification is found at Cys-198. Residue Cys-198 is the site of S-geranylgeranyl cysteine attachment. Residues 199-201 (FFL) constitute a propeptide, removed in mature form.

This sequence belongs to the small GTPase superfamily. Rho family. In terms of tissue distribution, expressed exclusively in the root, hypocotyl and stem.

The protein localises to the cytoplasm. It is found in the membrane. Inactive GDP-bound Rho GTPases reside in the cytosol, are found in a complex with Rho GDP-dissociation inhibitors (Rho GDIs), and are released from the GDI protein in order to translocate to membranes upon activation. This chain is Rac-like GTP-binding protein ARAC2 (ARAC2), found in Arabidopsis thaliana (Mouse-ear cress).